A 238-amino-acid chain; its full sequence is Large ribosomal subunit protein uL1 (238 aa).

It belongs to the universal ribosomal protein uL1 family. Part of the 50S ribosomal subunit.

In terms of biological role, binds directly to 23S rRNA. The L1 stalk is quite mobile in the ribosome, and is involved in E site tRNA release. Protein L1 is also a translational repressor protein, it controls the translation of the L11 operon by binding to its mRNA. This is Large ribosomal subunit protein uL1 from Salinispora tropica (strain ATCC BAA-916 / DSM 44818 / JCM 13857 / NBRC 105044 / CNB-440).